The sequence spans 800 residues: Protein translocase subunit SecA (800 aa).

ATP is bound by residues Q85, 103 to 107, and D504; that span reads GEGKT.

It belongs to the SecA family. Monomer and homodimer. Part of the essential Sec protein translocation apparatus which comprises SecA, SecYEG and auxiliary proteins SecDF. Other proteins may also be involved.

It localises to the cell membrane. It is found in the cytoplasm. The catalysed reaction is ATP + H2O + cellular proteinSide 1 = ADP + phosphate + cellular proteinSide 2.. Functionally, part of the Sec protein translocase complex. Interacts with the SecYEG preprotein conducting channel. Has a central role in coupling the hydrolysis of ATP to the transfer of proteins into and across the cell membrane, serving as an ATP-driven molecular motor driving the stepwise translocation of polypeptide chains across the membrane. This chain is Protein translocase subunit SecA, found in Lactobacillus delbrueckii subsp. bulgaricus (strain ATCC 11842 / DSM 20081 / BCRC 10696 / JCM 1002 / NBRC 13953 / NCIMB 11778 / NCTC 12712 / WDCM 00102 / Lb 14).